Here is a 431-residue protein sequence, read N- to C-terminus: 3'3'-cGAMP-specific phosphodiesterase 1 (431 aa).

Residues 39-155 (DINHGHRVGY…IFLADRVDYL (117 aa)) enclose the HD domain. Residues 231 to 427 (GVEEIMSIAM…YYQLSIAESP (197 aa)) form the HD-GYP domain. His-288 and Asp-289 together coordinate a divalent metal cation. The Proton donor role is filled by Lys-292. Residues His-317, His-341, His-342, and Asp-370 each contribute to the a divalent metal cation site.

As to quaternary structure, monomer. Requires Ca(2+) as cofactor. It depends on Mg(2+) as a cofactor.

It catalyses the reaction 3',3'-cGAMP + H2O = 5'-pApG-3' + H(+). The enzyme catalyses 5'-pApG-3' + H2O = 5'-ApG-3' + phosphate. In terms of biological role, phosphodiesterase (PDE) that catalyzes the hydrolysis of 3'3'-cyclic GMP-AMP (3'3'-cGAMP), leading to linear 5'-pApG. Also displays 5'-nucleotidase activity, further hydrolyzing 5'-pApG to 5'-ApG. Counteracts the function of the 3'3'-cGAMP synthase DncV, and is involved in the modulation of intracellular 3'3'-cGAMP levels. Enhances bacterial chemotaxis and inhibits intestinal colonization in vivo. Thus exerts a crucial role in regulating bacterial infectivity through catalyzing 3'3'-cGAMP degradation. Is specific for 3'3'-cGAMP since it cannot degrade other cGAMP linkage isomers (3'2'-, 2'3'-, and 2'2'-cGAMPs). Is also able to hydrolyze c-di-GMP but not c-di-AMP. This chain is 3'3'-cGAMP-specific phosphodiesterase 1, found in Vibrio cholerae serotype O1 (strain ATCC 39315 / El Tor Inaba N16961).